A 369-amino-acid chain; its full sequence is Histidinol-phosphate aminotransferase 2 (369 aa).

Residue K227 is modified to N6-(pyridoxal phosphate)lysine.

The protein belongs to the class-II pyridoxal-phosphate-dependent aminotransferase family. Histidinol-phosphate aminotransferase subfamily. In terms of assembly, homodimer. Requires pyridoxal 5'-phosphate as cofactor.

The catalysed reaction is L-histidinol phosphate + 2-oxoglutarate = 3-(imidazol-4-yl)-2-oxopropyl phosphate + L-glutamate. The protein operates within amino-acid biosynthesis; L-histidine biosynthesis; L-histidine from 5-phospho-alpha-D-ribose 1-diphosphate: step 7/9. This chain is Histidinol-phosphate aminotransferase 2 (hisC2), found in Mesorhizobium japonicum (strain LMG 29417 / CECT 9101 / MAFF 303099) (Mesorhizobium loti (strain MAFF 303099)).